The primary structure comprises 449 residues: Glucose-6-phosphate isomerase (449 aa).

T38 is modified (phosphothreonine). E290 acts as the Proton donor in catalysis. Catalysis depends on residues H311 and K425.

This sequence belongs to the GPI family.

The protein localises to the cytoplasm. The catalysed reaction is alpha-D-glucose 6-phosphate = beta-D-fructose 6-phosphate. It functions in the pathway carbohydrate biosynthesis; gluconeogenesis. Its pathway is carbohydrate degradation; glycolysis; D-glyceraldehyde 3-phosphate and glycerone phosphate from D-glucose: step 2/4. Catalyzes the reversible isomerization of glucose-6-phosphate to fructose-6-phosphate. This Geobacillus thermodenitrificans (strain NG80-2) protein is Glucose-6-phosphate isomerase.